The primary structure comprises 451 residues: Bifunctional protein GlmU (451 aa).

The interval 1 to 236 (MDQTPSYSPP…YEELRGINSK (236 aa)) is pyrophosphorylase. UDP-N-acetyl-alpha-D-glucosamine is bound by residues 17–20 (LAAG), K31, Q79, 84–85 (GT), 105–107 (YGD), G144, E162, N177, and N234. Position 107 (D107) interacts with Mg(2+). N234 contributes to the Mg(2+) binding site. The linker stretch occupies residues 237–257 (VELAEAEATVQIVLRRKALEN). Positions 258 to 451 (GVTMTAPETV…EIRRQLKGSV (194 aa)) are N-acetyltransferase. 2 residues coordinate UDP-N-acetyl-alpha-D-glucosamine: R323 and K341. H353 serves as the catalytic Proton acceptor. Y356 and N367 together coordinate UDP-N-acetyl-alpha-D-glucosamine. Residues A370, 376 to 377 (NY), S395, A413, and R430 contribute to the acetyl-CoA site.

The protein in the N-terminal section; belongs to the N-acetylglucosamine-1-phosphate uridyltransferase family. It in the C-terminal section; belongs to the transferase hexapeptide repeat family. In terms of assembly, homotrimer. Mg(2+) is required as a cofactor.

Its subcellular location is the cytoplasm. The enzyme catalyses alpha-D-glucosamine 1-phosphate + acetyl-CoA = N-acetyl-alpha-D-glucosamine 1-phosphate + CoA + H(+). It carries out the reaction N-acetyl-alpha-D-glucosamine 1-phosphate + UTP + H(+) = UDP-N-acetyl-alpha-D-glucosamine + diphosphate. Its pathway is nucleotide-sugar biosynthesis; UDP-N-acetyl-alpha-D-glucosamine biosynthesis; N-acetyl-alpha-D-glucosamine 1-phosphate from alpha-D-glucosamine 6-phosphate (route II): step 2/2. It participates in nucleotide-sugar biosynthesis; UDP-N-acetyl-alpha-D-glucosamine biosynthesis; UDP-N-acetyl-alpha-D-glucosamine from N-acetyl-alpha-D-glucosamine 1-phosphate: step 1/1. The protein operates within bacterial outer membrane biogenesis; LPS lipid A biosynthesis. Functionally, catalyzes the last two sequential reactions in the de novo biosynthetic pathway for UDP-N-acetylglucosamine (UDP-GlcNAc). The C-terminal domain catalyzes the transfer of acetyl group from acetyl coenzyme A to glucosamine-1-phosphate (GlcN-1-P) to produce N-acetylglucosamine-1-phosphate (GlcNAc-1-P), which is converted into UDP-GlcNAc by the transfer of uridine 5-monophosphate (from uridine 5-triphosphate), a reaction catalyzed by the N-terminal domain. This Granulibacter bethesdensis (strain ATCC BAA-1260 / CGDNIH1) protein is Bifunctional protein GlmU.